The following is a 931-amino-acid chain: Isoleucine--tRNA ligase (931 aa).

The 'HIGH' region signature appears at 58–68 (PYANGHLHCGH). Position 559 (Glu-559) interacts with L-isoleucyl-5'-AMP. Residues 600 to 604 (KLSKS) carry the 'KMSKS' region motif. Position 603 (Lys-603) interacts with ATP. Residues Cys-894, Cys-897, Cys-914, and Cys-917 each coordinate Zn(2+).

It belongs to the class-I aminoacyl-tRNA synthetase family. IleS type 1 subfamily. In terms of assembly, monomer. It depends on Zn(2+) as a cofactor.

Its subcellular location is the cytoplasm. It catalyses the reaction tRNA(Ile) + L-isoleucine + ATP = L-isoleucyl-tRNA(Ile) + AMP + diphosphate. In terms of biological role, catalyzes the attachment of isoleucine to tRNA(Ile). As IleRS can inadvertently accommodate and process structurally similar amino acids such as valine, to avoid such errors it has two additional distinct tRNA(Ile)-dependent editing activities. One activity is designated as 'pretransfer' editing and involves the hydrolysis of activated Val-AMP. The other activity is designated 'posttransfer' editing and involves deacylation of mischarged Val-tRNA(Ile). The polypeptide is Isoleucine--tRNA ligase (Legionella pneumophila (strain Paris)).